The primary structure comprises 735 residues: 1,4-alpha-glucan branching enzyme GlgB 1 (735 aa).

The Nucleophile role is filled by Asp-418. The active-site Proton donor is Glu-471.

The protein belongs to the glycosyl hydrolase 13 family. GlgB subfamily. As to quaternary structure, monomer.

The catalysed reaction is Transfers a segment of a (1-&gt;4)-alpha-D-glucan chain to a primary hydroxy group in a similar glucan chain.. Its pathway is glycan biosynthesis; glycogen biosynthesis. Catalyzes the formation of the alpha-1,6-glucosidic linkages in glycogen by scission of a 1,4-alpha-linked oligosaccharide from growing alpha-1,4-glucan chains and the subsequent attachment of the oligosaccharide to the alpha-1,6 position. The sequence is that of 1,4-alpha-glucan branching enzyme GlgB 1 from Rhizobium johnstonii (strain DSM 114642 / LMG 32736 / 3841) (Rhizobium leguminosarum bv. viciae).